A 263-amino-acid polypeptide reads, in one-letter code: SPRY domain-containing SOCS box protein 2 (263 aa).

Residues 1 to 16 (MGQTALAGGSSSTPTP) show a composition bias toward polar residues. A disordered region spans residues 1–48 (MGQTALAGGSSSTPTPQALYPDLSCPEGLEELLSAPPPDLGAQRRHGW). One can recognise a B30.2/SPRY domain in the interval 26-221 (PEGLEELLSA…VRIRYLGERR (196 aa)). One can recognise an SOCS box domain in the interval 222–263 (AEPHSLLHLSRLCVRHNLGDTRLGQVSALPLPPAMKRYLLYQ).

It belongs to the SPSB family. In terms of assembly, component of the probable ECS(SPSB2) E3 ubiquitin-protein ligase complex which contains CUL5, RNF7/RBX2, Elongin BC complex and SPSB2. Interacts with CUL5, RNF7, ELOB and ELOC. Interacts with MET. Interacts (via B30.2/SPRY domain) with PAWR; this interaction occurs in association with the Elongin BC complex. Interacts with NOS2. As to quaternary structure, (Microbial infection) Interacts (via C-terminus) with HCV envelope glycoprotein E1. Interacts (via C-terminus) with HCV non-structural protein 5A; this interaction targets NS5A for ubiquitination and degradation.

The protein localises to the cytoplasm. It localises to the cytosol. The protein operates within protein modification; protein ubiquitination. Functionally, substrate recognition component of a SCF-like ECS (Elongin BC-CUL2/5-SOCS-box protein) E3 ubiquitin-protein ligase complex which mediates the ubiquitination and subsequent proteasomal degradation of target proteins. Negatively regulates nitric oxide (NO) production and limits cellular toxicity in activated macrophages by mediating the ubiquitination and proteasomal degradation of NOS2. Acts as a bridge which links NOS2 with the ECS E3 ubiquitin ligase complex components ELOC and CUL5. This is SPRY domain-containing SOCS box protein 2 (SPSB2) from Homo sapiens (Human).